The sequence spans 248 residues: Triosephosphate isomerase (248 aa).

Residue 9-11 (NWK) coordinates substrate. H94 functions as the Electrophile in the catalytic mechanism. E166 (proton acceptor) is an active-site residue. Substrate contacts are provided by residues G172, S211, and 232 to 233 (GG).

Belongs to the triosephosphate isomerase family. Homodimer.

It is found in the cytoplasm. It catalyses the reaction D-glyceraldehyde 3-phosphate = dihydroxyacetone phosphate. It participates in carbohydrate biosynthesis; gluconeogenesis. It functions in the pathway carbohydrate degradation; glycolysis; D-glyceraldehyde 3-phosphate from glycerone phosphate: step 1/1. Involved in the gluconeogenesis. Catalyzes stereospecifically the conversion of dihydroxyacetone phosphate (DHAP) to D-glyceraldehyde-3-phosphate (G3P). This is Triosephosphate isomerase from Herminiimonas arsenicoxydans.